The following is a 364-amino-acid chain: Very-long-chain (3R)-3-hydroxyacyl-CoA dehydratase 3 (364 aa).

Residues 1-151 (MAMENQVLTP…ETLTNLRKGY (151 aa)) are Cytoplasmic-facing. The CS domain maps to 7 to 96 (VLTPHVYWAQ…KVSQWWERLT (90 aa)). The residue at position 9 (threonine 9) is a Phosphothreonine. The stretch at 113–138 (LDESDAEMELRAKEEERLNKLRLESE) forms a coiled coil. Residues serine 116 and serine 137 each carry the phosphoserine modification. Residues 152–172 (LFMYNLVQFLGFSWIFVNLTV) form a helical membrane-spanning segment. Residues 173 to 191 (RFCILGKESFYDTFHTVAD) lie on the Lumenal side of the membrane. The chain crosses the membrane as a helical span at residues 192 to 212 (MMYFCQMLAVVETINAAIGVT). The Cytoplasmic segment spans residues 213–214 (TS). The chain crosses the membrane as a helical span at residues 215–235 (PVLPSLIQLLGRNFILFIIFG). Over 236 to 244 (TMEEMQNKA) the chain is Lumenal. The helical transmembrane segment at 245–265 (VVFFVFYLWSAIEIFRYSFYM) threads the bilayer. Over 266–282 (LTCIDMDWEVLTWLRYT) the chain is Cytoplasmic. Residues 283–303 (LWIPLYPLGCLAEAVSVVQSI) traverse the membrane as a helical segment. Residues tyrosine 288 and glutamate 295 contribute to the active site. The Lumenal portion of the chain corresponds to 304-324 (PIFNETGRFSFTLPYPVKIKV). Residues 325-345 (RFSFFLQIYLIMIFLGLYINF) traverse the membrane as a helical segment. Residues 346 to 364 (RHLYKQRRRRYGQKKKKIH) are Cytoplasmic-facing.

This sequence belongs to the very long-chain fatty acids dehydratase HACD family. As to quaternary structure, may interact with enzymes of the ELO family (including ELOVL1); with those enzymes that mediate condensation, the first of the four steps of the reaction cycle responsible for fatty acids elongation, may be part of a larger fatty acids elongase complex. Interacts with RAC1.

It is found in the endoplasmic reticulum membrane. The enzyme catalyses a very-long-chain (3R)-3-hydroxyacyl-CoA = a very-long-chain (2E)-enoyl-CoA + H2O. The catalysed reaction is (3R)-hydroxyhexadecanoyl-CoA = (2E)-hexadecenoyl-CoA + H2O. Its pathway is lipid metabolism; fatty acid biosynthesis. Its function is as follows. Catalyzes the third of the four reactions of the long-chain fatty acids elongation cycle. This endoplasmic reticulum-bound enzymatic process, allows the addition of two carbons to the chain of long- and very long-chain fatty acids/VLCFAs per cycle. This enzyme catalyzes the dehydration of the 3-hydroxyacyl-CoA intermediate into trans-2,3-enoyl-CoA, within each cycle of fatty acid elongation. Thereby, it participates in the production of VLCFAs of different chain lengths that are involved in multiple biological processes as precursors of membrane lipids and lipid mediators. Involved in Rac1-signaling pathways leading to the modulation of gene expression. The sequence is that of Very-long-chain (3R)-3-hydroxyacyl-CoA dehydratase 3 from Pongo abelii (Sumatran orangutan).